A 169-amino-acid polypeptide reads, in one-letter code: Peptide deformylase (169 aa).

C93 and H135 together coordinate Fe cation. E136 is a catalytic residue. H139 lines the Fe cation pocket.

Belongs to the polypeptide deformylase family. Fe(2+) is required as a cofactor.

The enzyme catalyses N-terminal N-formyl-L-methionyl-[peptide] + H2O = N-terminal L-methionyl-[peptide] + formate. In terms of biological role, removes the formyl group from the N-terminal Met of newly synthesized proteins. Requires at least a dipeptide for an efficient rate of reaction. N-terminal L-methionine is a prerequisite for activity but the enzyme has broad specificity at other positions. This chain is Peptide deformylase, found in Aquifex aeolicus (strain VF5).